Reading from the N-terminus, the 938-residue chain is Protein translocase subunit SecA (938 aa).

ATP contacts are provided by residues Gln90, 108-112, and Asp504; that span reads GEGKT.

This sequence belongs to the SecA family. Monomer and homodimer. Part of the essential Sec protein translocation apparatus which comprises SecA, SecYEG and auxiliary proteins SecDF. Other proteins may also be involved.

It is found in the cell inner membrane. It localises to the cellular thylakoid membrane. The protein resides in the cytoplasm. The enzyme catalyses ATP + H2O + cellular proteinSide 1 = ADP + phosphate + cellular proteinSide 2.. Its function is as follows. Part of the Sec protein translocase complex. Interacts with the SecYEG preprotein conducting channel. Has a central role in coupling the hydrolysis of ATP to the transfer of proteins into and across the cell membrane, serving as an ATP-driven molecular motor driving the stepwise translocation of polypeptide chains across the membrane. In terms of biological role, probably participates in protein translocation into and across both the cytoplasmic and thylakoid membranes in cyanobacterial cells. This chain is Protein translocase subunit SecA, found in Picosynechococcus sp. (strain ATCC 27264 / PCC 7002 / PR-6) (Agmenellum quadruplicatum).